The chain runs to 622 residues: MALLQISEPGMAPAPHQRRLAVGIDLGTTNSLVAAVRNSIPEALPDDAGRVLLPSVVRYLDKGGRRIGHAAKEEAAIDPRNTIVSVKRFMGRGKAEVEGAANAPYEFVDAPGMVQIRTVDGVKSPVEVSAEILATLRQRAEDTLGDDLVGAVITVPAYFDDAQRQATKDAARLAGLNVLRLLNEPTAAAIAYGLDNGAEGLYAVYDLGGGTFDLSILKLTKGVFEVLAAGGDSALGGDDFDHLLFEHVLAQAGLEAAALAPEDVRLLLDRVRGAKEALSAAPQARVDVKLSTGEKLAQTITRDTFAALVEPLVQRTLGPTRKALRDAQVSAADIKGVVLVGGATRMPVIRDAVAKYFGQPPLVNLDPDQVVALGAAIQADLLAGNRSGGDDWLLLDVIPLSLGVETMGGLVEKIIPRNSTIPVARAQEFTTFKDGQTAMAIHVVQGERELVSDCRSLARFELRGIPPMTAGAARIRVTYQVDADGLLSVFAREQHSGVEASVVVKPSYGLGDDDIARMLEDSFKTAEVDMRARALREAQVEAQRLVEATEAALVADGDLLDASERATVDALVASLRALAPGDDADAIDTATKALAEGTDEFAARRMDKSIKRALAGRKLDEI.

It belongs to the heat shock protein 70 family.

Its function is as follows. Chaperone involved in the maturation of iron-sulfur cluster-containing proteins. Has a low intrinsic ATPase activity which is markedly stimulated by HscB. This Burkholderia pseudomallei (strain K96243) protein is Chaperone protein HscA homolog.